Here is a 1492-residue protein sequence, read N- to C-terminus: Cystic fibrosis transmembrane conductance regulator (1492 aa).

Topologically, residues Met1–Phe78 are cytoplasmic. The chain crosses the membrane as a helical span at residues Phe79 to Gln99. The ABC transmembrane type-1 1 domain maps to Phe82–Leu366. At Pro100–Tyr123 the chain is on the extracellular side. The chain crosses the membrane as a helical span at residues Leu124–Gln147. The Cytoplasmic portion of the chain corresponds to His148–Val196. A helical transmembrane segment spans residues Ala197–Trp217. Residues Asn218 to Phe223 are Extracellular-facing. The helical transmembrane segment at Val224 to Lys244 threads the bilayer. Residues Met245–Lys299 are Cytoplasmic-facing. The chain crosses the membrane as a helical span at residues Val300–Phe320. Residues Leu321–Thr340 are Extracellular-facing. Residues Ile341 to Ile359 form a helical membrane-spanning segment. The Cytoplasmic segment spans residues Gln360–Asn867. ATP is bound by residues Trp402, Ser435, Gly459 to Ser466, and Gln494. The 224-residue stretch at Asn424–Gly647 folds into the ABC transporter 1 domain. The segment at Ser655–Glu840 is disordered R region. The helical transmembrane segment at Leu868–Ala888 threads the bilayer. An ABC transmembrane type-1 2 domain is found at Leu868–Gly1169. Residues Gly889–Ile932 lie on the Extracellular side of the membrane. N-linked (GlcNAc...) asparagine glycans are attached at residues Asn905 and Asn923. The discontinuously helical transmembrane segment at Tyr933–His953 threads the bilayer. Residues Thr954 to Thr1004 lie on the Cytoplasmic side of the membrane. The chain crosses the membrane as a helical span at residues Val1005–Leu1025. The Extracellular segment spans residues Gln1026–Pro1027. Residues Tyr1028–Leu1048 traverse the membrane as a helical segment. The Cytoplasmic segment spans residues Arg1049–Thr1109. The helical transmembrane segment at Leu1110–Phe1130 threads the bilayer. Residues Ile1131–Gly1144 are Extracellular-facing. Residues Ile1145–Ile1165 form a helical membrane-spanning segment. The Cytoplasmic portion of the chain corresponds to Asp1166–Leu1492. The ABC transporter 2 domain occupies Met1220–His1453. ATP-binding positions include Tyr1229 and Gly1254–Ser1261. Over residues Arg1465–Pro1474 the composition is skewed to basic residues. Residues Arg1465–Leu1492 are disordered. The segment covering Glu1481–Leu1492 has biased composition (acidic residues). The PDZ-binding motif lies at Ala1483–Glu1485.

Belongs to the ABC transporter superfamily. ABCC family. CFTR transporter (TC 3.A.1.202) subfamily. In terms of assembly, monomer; does not require oligomerization for channel activity. May form oligomers in the membrane. Phosphorylated; cAMP treatment promotes phosphorylation and activates the channel. Dephosphorylation decreases the ATPase activity (in vitro). Phosphorylation at PKA sites activates the channel. Phosphorylation at PKC sites enhances the response to phosphorylation by PKA. In terms of tissue distribution, expressed in the rectal gland (at protein level).

Its subcellular location is the apical cell membrane. It is found in the early endosome membrane. The protein resides in the cell membrane. The protein localises to the recycling endosome membrane. It localises to the endoplasmic reticulum membrane. It catalyses the reaction ATP + H2O + closed Cl(-) channel = ADP + phosphate + open Cl(-) channel.. It carries out the reaction chloride(in) = chloride(out). The enzyme catalyses hydrogencarbonate(in) = hydrogencarbonate(out). The catalysed reaction is ATP + H2O = ADP + phosphate + H(+). In terms of biological role, epithelial ion channel that plays an important role in the regulation of epithelial ion and water transport and fluid homeostasis. Mediates the transport of chloride ions across the cell membrane. Possesses an intrinsic ATPase activity and utilizes ATP to gate its channel; the passive flow of anions through the channel is gated by cycles of ATP binding and hydrolysis by the ATP-binding domains. The ion channel is also permeable to HCO(3)(-); selectivity depends on the extracellular chloride concentration. Exerts its function also by modulating the activity of other ion channels and transporters. Contributes to the regulation of the pH and the ion content of the epithelial fluid layer. The sequence is that of Cystic fibrosis transmembrane conductance regulator from Squalus acanthias (Spiny dogfish).